A 364-amino-acid polypeptide reads, in one-letter code: Putative methylthioribose-1-phosphate isomerase (364 aa).

Residues 57–59 (RGA), arginine 100, and glutamine 206 contribute to the substrate site. Residue aspartate 247 is the Proton donor of the active site. Residue 257–258 (NK) coordinates substrate.

This sequence belongs to the eIF-2B alpha/beta/delta subunits family. MtnA subfamily.

The catalysed reaction is 5-(methylsulfanyl)-alpha-D-ribose 1-phosphate = 5-(methylsulfanyl)-D-ribulose 1-phosphate. Its function is as follows. Catalyzes the interconversion of methylthioribose-1-phosphate (MTR-1-P) into methylthioribulose-1-phosphate (MTRu-1-P). The polypeptide is Putative methylthioribose-1-phosphate isomerase (Pyrococcus horikoshii (strain ATCC 700860 / DSM 12428 / JCM 9974 / NBRC 100139 / OT-3)).